A 193-amino-acid polypeptide reads, in one-letter code: NADH-quinone oxidoreductase subunit B (193 aa).

[4Fe-4S] cluster contacts are provided by C72, C73, C137, and C167.

Belongs to the complex I 20 kDa subunit family. As to quaternary structure, NDH-1 is composed of 14 different subunits. Subunits NuoB, C, D, E, F, and G constitute the peripheral sector of the complex. [4Fe-4S] cluster is required as a cofactor.

The protein localises to the cell inner membrane. It carries out the reaction a quinone + NADH + 5 H(+)(in) = a quinol + NAD(+) + 4 H(+)(out). NDH-1 shuttles electrons from NADH, via FMN and iron-sulfur (Fe-S) centers, to quinones in the respiratory chain. The immediate electron acceptor for the enzyme in this species is believed to be ubiquinone. Couples the redox reaction to proton translocation (for every two electrons transferred, four hydrogen ions are translocated across the cytoplasmic membrane), and thus conserves the redox energy in a proton gradient. This is NADH-quinone oxidoreductase subunit B from Bartonella quintana (strain Toulouse) (Rochalimaea quintana).